Consider the following 209-residue polypeptide: Thiamine-phosphate synthase (209 aa).

4-amino-2-methyl-5-(diphosphooxymethyl)pyrimidine is bound by residues 37–41 (QYRDK) and Asn69. Positions 70 and 89 each coordinate Mg(2+). Ser108 is a 4-amino-2-methyl-5-(diphosphooxymethyl)pyrimidine binding site. 135–137 (SPT) provides a ligand contact to 2-[(2R,5Z)-2-carboxy-4-methylthiazol-5(2H)-ylidene]ethyl phosphate. Lys138 provides a ligand contact to 4-amino-2-methyl-5-(diphosphooxymethyl)pyrimidine. 2-[(2R,5Z)-2-carboxy-4-methylthiazol-5(2H)-ylidene]ethyl phosphate-binding positions include Gly165 and 185–186 (VS).

It belongs to the thiamine-phosphate synthase family. It depends on Mg(2+) as a cofactor.

It carries out the reaction 2-[(2R,5Z)-2-carboxy-4-methylthiazol-5(2H)-ylidene]ethyl phosphate + 4-amino-2-methyl-5-(diphosphooxymethyl)pyrimidine + 2 H(+) = thiamine phosphate + CO2 + diphosphate. It catalyses the reaction 2-(2-carboxy-4-methylthiazol-5-yl)ethyl phosphate + 4-amino-2-methyl-5-(diphosphooxymethyl)pyrimidine + 2 H(+) = thiamine phosphate + CO2 + diphosphate. The catalysed reaction is 4-methyl-5-(2-phosphooxyethyl)-thiazole + 4-amino-2-methyl-5-(diphosphooxymethyl)pyrimidine + H(+) = thiamine phosphate + diphosphate. Its pathway is cofactor biosynthesis; thiamine diphosphate biosynthesis; thiamine phosphate from 4-amino-2-methyl-5-diphosphomethylpyrimidine and 4-methyl-5-(2-phosphoethyl)-thiazole: step 1/1. In terms of biological role, condenses 4-methyl-5-(beta-hydroxyethyl)thiazole monophosphate (THZ-P) and 2-methyl-4-amino-5-hydroxymethyl pyrimidine pyrophosphate (HMP-PP) to form thiamine monophosphate (TMP). This Halorhodospira halophila (strain DSM 244 / SL1) (Ectothiorhodospira halophila (strain DSM 244 / SL1)) protein is Thiamine-phosphate synthase.